The primary structure comprises 258 residues: U6 snRNA phosphodiesterase 1 (258 aa).

The interval 1-20 (MALVDYGGSSSSASEDEDCT) is disordered. The active-site Proton acceptor is His-117. AMP is bound by residues 117–119 (HLS), Tyr-200, and 202–208 (PASFHVS). Residues Tyr-200 and 204 to 208 (SFHVS) contribute to the UMP site. Residue His-206 is the Proton donor of the active site.

The protein belongs to the 2H phosphoesterase superfamily. USB1 family.

It localises to the nucleus. It catalyses the reaction a 3'-end uridylyl-uridine-RNA = a 3'-end 2',3'-cyclophospho-uridine-RNA + uridine. Its function is as follows. 3'-5' RNA exonuclease that trims the 3' end of oligo(U) tracts of the pre-U6 small nuclear RNA (snRNA) molecule, leading to the formation of a mature U6 snRNA 3' end-terminated with a 2',3'-cyclic phosphate. Participates in the U6 snRNA 3' end processing that prevents U6 snRNA degradation. The sequence is that of U6 snRNA phosphodiesterase 1 from Drosophila melanogaster (Fruit fly).